A 447-amino-acid polypeptide reads, in one-letter code: Tubulin alpha chain (447 aa).

GTP contacts are provided by glutamine 11, glutamate 71, glycine 144, threonine 145, threonine 179, asparagine 206, and asparagine 228. Glutamate 71 is a Mg(2+) binding site. Residue glutamate 254 is part of the active site.

The protein belongs to the tubulin family. Dimer of alpha and beta chains. A typical microtubule is a hollow water-filled tube with an outer diameter of 25 nm and an inner diameter of 15 nM. Alpha-beta heterodimers associate head-to-tail to form protofilaments running lengthwise along the microtubule wall with the beta-tubulin subunit facing the microtubule plus end conferring a structural polarity. Microtubules usually have 13 protofilaments but different protofilament numbers can be found in some organisms and specialized cells. Mg(2+) is required as a cofactor.

The protein localises to the cytoplasm. Its subcellular location is the cytoskeleton. The enzyme catalyses GTP + H2O = GDP + phosphate + H(+). Tubulin is the major constituent of microtubules, a cylinder consisting of laterally associated linear protofilaments composed of alpha- and beta-tubulin heterodimers. Microtubules grow by the addition of GTP-tubulin dimers to the microtubule end, where a stabilizing cap forms. Below the cap, tubulin dimers are in GDP-bound state, owing to GTPase activity of alpha-tubulin. This is Tubulin alpha chain (TUBA) from Avena sativa (Oat).